A 121-amino-acid polypeptide reads, in one-letter code: Large ribosomal subunit protein bL12 (121 aa).

Belongs to the bacterial ribosomal protein bL12 family. In terms of assembly, homodimer. Part of the ribosomal stalk of the 50S ribosomal subunit. Forms a multimeric L10(L12)X complex, where L10 forms an elongated spine to which 2 to 4 L12 dimers bind in a sequential fashion. Binds GTP-bound translation factors.

Forms part of the ribosomal stalk which helps the ribosome interact with GTP-bound translation factors. Is thus essential for accurate translation. This chain is Large ribosomal subunit protein bL12, found in Acinetobacter baylyi (strain ATCC 33305 / BD413 / ADP1).